A 699-amino-acid polypeptide reads, in one-letter code: Homeobox-leucine zipper protein HDG8 (699 aa).

The segment at 1–31 is disordered; the sequence is MDNNGGGSSGNEQYTSGDAKQNGKRTCHRHT. The span at 10 to 19 shows a compositional bias: polar residues; it reads GNEQYTSGDA. Residues 22–31 show a composition bias toward basic residues; sequence NGKRTCHRHT. The homeobox DNA-binding region spans 23–82; that stretch reads GKRTCHRHTPQQIQRLEAYFKECPHPDERQRNQLCRELKLEPDQIKFWFQNKRTQSKTQE. The stretch at 89 to 149 forms a coiled coil; the sequence is LLRGENETLQ…LKDHRDRISN (61 aa). One can recognise an START domain in the interval 204-438; sequence AETDMSLLSE…LERMCERMAL (235 aa).

It belongs to the HD-ZIP homeobox family. Class IV subfamily. As to quaternary structure, interacts with ANT. Expressed in the embryo at early stage and in the endosperm.

The protein localises to the nucleus. Probable transcription factor. The chain is Homeobox-leucine zipper protein HDG8 from Arabidopsis thaliana (Mouse-ear cress).